The chain runs to 103 residues: Large ribosomal subunit protein bL21 (103 aa).

Belongs to the bacterial ribosomal protein bL21 family. In terms of assembly, part of the 50S ribosomal subunit. Contacts protein L20.

Its function is as follows. This protein binds to 23S rRNA in the presence of protein L20. The chain is Large ribosomal subunit protein bL21 from Vesicomyosocius okutanii subsp. Calyptogena okutanii (strain HA).